Consider the following 148-residue polypeptide: Ribonuclease pancreatic (148 aa).

The N-terminal stretch at 1–25 is a signal peptide; that stretch reads MGLEKSLILLPLLVLVFGWVQPSLG. Residues K32 and R35 each contribute to the substrate site. H37 serves as the catalytic Proton acceptor. Cystine bridges form between C50–C108, C64–C119, C82–C134, and C89–C96. Residue N58 is glycosylated (N-linked (GlcNAc...) asparagine). 65–69 lines the substrate pocket; sequence KPVNT. The N-linked (GlcNAc...) asparagine glycan is linked to N86. 2 residues coordinate substrate: K90 and R109. H143 acts as the Proton donor in catalysis.

This sequence belongs to the pancreatic ribonuclease family. As to quaternary structure, monomer. Interacts with and forms tight 1:1 complexes with RNH1. Dimerization of two such complexes may occur. Interaction with RNH1 inhibits this protein. As to expression, pancreas.

It is found in the secreted. It carries out the reaction an [RNA] containing cytidine + H2O = an [RNA]-3'-cytidine-3'-phosphate + a 5'-hydroxy-ribonucleotide-3'-[RNA].. The enzyme catalyses an [RNA] containing uridine + H2O = an [RNA]-3'-uridine-3'-phosphate + a 5'-hydroxy-ribonucleotide-3'-[RNA].. Endonuclease that catalyzes the cleavage of RNA on the 3' side of pyrimidine nucleotides. Acts on single-stranded and double-stranded RNA. This is Ribonuclease pancreatic (RNASE1) from Myodes glareolus (Bank vole).